Here is a 371-residue protein sequence, read N- to C-terminus: Carlactonoate CLA methyltransferase (371 aa).

Tyrosine 21 is a binding site for S-adenosyl-L-homocysteine. Residue glutamine 28 coordinates (11R)-carlactonoate. Positions 62, 67, 101, 102, 141, and 142 each coordinate S-adenosyl-L-homocysteine. The (11R)-carlactonoate site is built by histidine 162 and tryptophan 163. Residues asparagine 180, aspartate 266, tyrosine 268, and aspartate 269 each contribute to the Mg(2+) site.

The protein belongs to the methyltransferase superfamily. Type-7 methyltransferase family. SABATH subfamily. As to quaternary structure, homodimer. Mg(2+) is required as a cofactor.

It carries out the reaction (11R)-carlactonoate + S-adenosyl-L-methionine = (11R)-methyl carlactonoate + S-adenosyl-L-homocysteine. Its function is as follows. Methyltransferase involved in the biosynthesis of strigolactone natural products, bioactive compounds promoting plant fitness and soil microbe interactions, but preventing shoot branching. Catalyzes the biosynthesis of (11R)-methyl carlactonoate (MeCLA) from (11R)-carlactonoate (CLA), downstream of MAX1; MeCLA is probably biologically active as a hormone regulating shoot branching and serves as a precursor of non-canonical strigolactones (SLs). The sequence is that of Carlactonoate CLA methyltransferase from Arabidopsis thaliana (Mouse-ear cress).